The chain runs to 256 residues: Acetyl-coenzyme A carboxylase carboxyl transferase subunit alpha (256 aa).

Residues 1-236 (MTKITRIVRE…KQELLVELEQ (236 aa)) enclose the CoA carboxyltransferase C-terminal domain.

This sequence belongs to the AccA family. In terms of assembly, acetyl-CoA carboxylase is a heterohexamer composed of biotin carboxyl carrier protein (AccB), biotin carboxylase (AccC) and two subunits each of ACCase subunit alpha (AccA) and ACCase subunit beta (AccD).

It localises to the cytoplasm. The enzyme catalyses N(6)-carboxybiotinyl-L-lysyl-[protein] + acetyl-CoA = N(6)-biotinyl-L-lysyl-[protein] + malonyl-CoA. It participates in lipid metabolism; malonyl-CoA biosynthesis; malonyl-CoA from acetyl-CoA: step 1/1. Component of the acetyl coenzyme A carboxylase (ACC) complex. First, biotin carboxylase catalyzes the carboxylation of biotin on its carrier protein (BCCP) and then the CO(2) group is transferred by the carboxyltransferase to acetyl-CoA to form malonyl-CoA. This Streptococcus gordonii (strain Challis / ATCC 35105 / BCRC 15272 / CH1 / DL1 / V288) protein is Acetyl-coenzyme A carboxylase carboxyl transferase subunit alpha.